A 506-amino-acid polypeptide reads, in one-letter code: Maturase K (506 aa).

Belongs to the intron maturase 2 family. MatK subfamily.

It localises to the plastid. It is found in the chloroplast. Functionally, usually encoded in the trnK tRNA gene intron. Probably assists in splicing its own and other chloroplast group II introns. This chain is Maturase K, found in Lathyrus aphaca (Yellow vetchling).